A 72-amino-acid chain; its full sequence is Crustacean hyperglycemic hormone A (72 aa).

Gln-1 is subject to Pyrrolidone carboxylic acid. Phe-3 carries the post-translational modification D-phenylalanine; in form CHHA-II. 3 cysteine pairs are disulfide-bonded: Cys-7-Cys-43, Cys-23-Cys-39, and Cys-26-Cys-52. Val-72 is modified (valine amide).

In terms of processing, stereoinversion of L-Phe (in CHHA-I) to D-Phe (in CHHA-II).

The protein resides in the secreted. Its function is as follows. Hormone found in the sinus gland of isopods and decapods which controls the blood sugar level. Has a secretagogue action over the amylase released from the midgut gland. May act as a stress hormone and may be involved in the control of molting and reproduction. The polypeptide is Crustacean hyperglycemic hormone A (Cherax destructor (Common yabby crayfish)).